The sequence spans 340 residues: Heat-inducible transcription repressor HrcA (340 aa).

It belongs to the HrcA family.

In terms of biological role, negative regulator of class I heat shock genes (grpE-dnaK-dnaJ and groELS operons). Prevents heat-shock induction of these operons. The protein is Heat-inducible transcription repressor HrcA of Chromobacterium violaceum (strain ATCC 12472 / DSM 30191 / JCM 1249 / CCUG 213 / NBRC 12614 / NCIMB 9131 / NCTC 9757 / MK).